Reading from the N-terminus, the 254-residue chain is MSFTVLIPARLASTRLPDKPLADIAGKPMVVRVAERAALSGAERVMIATDDARVQQAAAAHGHAAILTRPDHPTGTDRLSEAVDALGLPDDAIVVNVQGDEPLIEPALIDAVAAQLVAAPHADIATCACPLADAEALFNPNVVKVVCTADRRALYFSRAPIPWARDALAGGARVLAPGLPAWHHIGIYAYRVAFLRRFPALSQGQLERYESLEQLRAMEHGHVIVVHHTDSAPAAGVDTPADLERARAAYTNRL.

It belongs to the KdsB family.

The protein resides in the cytoplasm. It carries out the reaction 3-deoxy-alpha-D-manno-oct-2-ulosonate + CTP = CMP-3-deoxy-beta-D-manno-octulosonate + diphosphate. It participates in nucleotide-sugar biosynthesis; CMP-3-deoxy-D-manno-octulosonate biosynthesis; CMP-3-deoxy-D-manno-octulosonate from 3-deoxy-D-manno-octulosonate and CTP: step 1/1. It functions in the pathway bacterial outer membrane biogenesis; lipopolysaccharide biosynthesis. Activates KDO (a required 8-carbon sugar) for incorporation into bacterial lipopolysaccharide in Gram-negative bacteria. The protein is 3-deoxy-manno-octulosonate cytidylyltransferase of Bordetella pertussis (strain Tohama I / ATCC BAA-589 / NCTC 13251).